We begin with the raw amino-acid sequence, 285 residues long: Bifunctional protein FolD (285 aa).

Residues 166–168, serine 191, and threonine 232 each bind NADP(+); that span reads GRS.

This sequence belongs to the tetrahydrofolate dehydrogenase/cyclohydrolase family. In terms of assembly, homodimer.

It catalyses the reaction (6R)-5,10-methylene-5,6,7,8-tetrahydrofolate + NADP(+) = (6R)-5,10-methenyltetrahydrofolate + NADPH. It carries out the reaction (6R)-5,10-methenyltetrahydrofolate + H2O = (6R)-10-formyltetrahydrofolate + H(+). It functions in the pathway one-carbon metabolism; tetrahydrofolate interconversion. Its function is as follows. Catalyzes the oxidation of 5,10-methylenetetrahydrofolate to 5,10-methenyltetrahydrofolate and then the hydrolysis of 5,10-methenyltetrahydrofolate to 10-formyltetrahydrofolate. This is Bifunctional protein FolD from Chloroflexus aurantiacus (strain ATCC 29366 / DSM 635 / J-10-fl).